Consider the following 193-residue polypeptide: ATP-dependent Clp protease proteolytic subunit (193 aa).

Residue Ser-97 is the Nucleophile of the active site. The active site involves His-122.

The protein belongs to the peptidase S14 family. As to quaternary structure, fourteen ClpP subunits assemble into 2 heptameric rings which stack back to back to give a disk-like structure with a central cavity, resembling the structure of eukaryotic proteasomes.

It localises to the cytoplasm. The catalysed reaction is Hydrolysis of proteins to small peptides in the presence of ATP and magnesium. alpha-casein is the usual test substrate. In the absence of ATP, only oligopeptides shorter than five residues are hydrolyzed (such as succinyl-Leu-Tyr-|-NHMec, and Leu-Tyr-Leu-|-Tyr-Trp, in which cleavage of the -Tyr-|-Leu- and -Tyr-|-Trp bonds also occurs).. Its function is as follows. Cleaves peptides in various proteins in a process that requires ATP hydrolysis. Has a chymotrypsin-like activity. Plays a major role in the degradation of misfolded proteins. The protein is ATP-dependent Clp protease proteolytic subunit of Fusobacterium nucleatum subsp. nucleatum (strain ATCC 25586 / DSM 15643 / BCRC 10681 / CIP 101130 / JCM 8532 / KCTC 2640 / LMG 13131 / VPI 4355).